Reading from the N-terminus, the 367-residue chain is Damage-control phosphatase At2g17340 (367 aa).

The residue at position 1 (M1) is an N-acetylmethionine. Residues D220, N221, and D256 each contribute to the Mn(2+) site. A Subfamily II EGMGR motif motif is present at residues 318–322; the sequence is EGMGR.

Belongs to the damage-control phosphatase family. Phosphopantetheine phosphatase II subfamily. Multimer. Mn(2+) serves as cofactor. The cofactor is Ni(2+).

Activity is strongly promoted by Co(2+), Ni(2+), Mg(2+), Cu(2+) and Mn(2+). Activity is inhibited by EDTA. Functionally, metal-dependent phosphatase with probable damage-control functions. Shows phosphatase activity against several substrates, including sugar phosphates and p-nitrophenyl phosphate(pNPP). Prefers sugar phosphate substrates, including the extremely potent glycating agents ribose-5-phosphate and erythrose-4-phosphate. This Arabidopsis thaliana (Mouse-ear cress) protein is Damage-control phosphatase At2g17340.